The sequence spans 932 residues: Protein translocase subunit SecA, chloroplastic (932 aa).

95-102 (MRTGEGKT) serves as a coordination point for ATP. Over residues 632–641 (HESRRVDNQL) the composition is skewed to basic and acidic residues. The interval 632–653 (HESRRVDNQLRGRSGRQGDPGS) is disordered.

The protein belongs to the SecA family.

The protein localises to the plastid. The protein resides in the chloroplast stroma. It is found in the chloroplast thylakoid membrane. It carries out the reaction ATP + H2O + chloroplast-proteinSide 1 = ADP + phosphate + chloroplast-proteinSide 2.. Its function is as follows. Has a central role in coupling the hydrolysis of ATP to the transfer of proteins across the thylakoid membrane. This chain is Protein translocase subunit SecA, chloroplastic, found in Ostreococcus lucimarinus (strain CCE9901).